The sequence spans 137 residues: Large ribosomal subunit protein uL16 (137 aa).

Belongs to the universal ribosomal protein uL16 family. In terms of assembly, part of the 50S ribosomal subunit.

Functionally, binds 23S rRNA and is also seen to make contacts with the A and possibly P site tRNAs. This Alcanivorax borkumensis (strain ATCC 700651 / DSM 11573 / NCIMB 13689 / SK2) protein is Large ribosomal subunit protein uL16.